We begin with the raw amino-acid sequence, 585 residues long: tRNA 5-methylaminomethyl-2-thiouridine biosynthesis bifunctional protein MnmC (585 aa).

Residues 1–236 (MTPDGLYCDP…KRERLEAVWP (236 aa)) are tRNA (mnm(5)s(2)U34)-methyltransferase. An FAD-dependent cmnm(5)s(2)U34 oxidoreductase region spans residues 254 to 585 (LGAGIAGASL…SRRAGQGAAG (332 aa)). The segment at 564–585 (EAMAPGRFAERRSRRAGQGAAG) is disordered.

In the N-terminal section; belongs to the methyltransferase superfamily. tRNA (mnm(5)s(2)U34)-methyltransferase family. It in the C-terminal section; belongs to the DAO family. FAD serves as cofactor.

Its subcellular location is the cytoplasm. The catalysed reaction is 5-aminomethyl-2-thiouridine(34) in tRNA + S-adenosyl-L-methionine = 5-methylaminomethyl-2-thiouridine(34) in tRNA + S-adenosyl-L-homocysteine + H(+). In terms of biological role, catalyzes the last two steps in the biosynthesis of 5-methylaminomethyl-2-thiouridine (mnm(5)s(2)U) at the wobble position (U34) in tRNA. Catalyzes the FAD-dependent demodification of cmnm(5)s(2)U34 to nm(5)s(2)U34, followed by the transfer of a methyl group from S-adenosyl-L-methionine to nm(5)s(2)U34, to form mnm(5)s(2)U34. The polypeptide is tRNA 5-methylaminomethyl-2-thiouridine biosynthesis bifunctional protein MnmC (Maricaulis maris (strain MCS10) (Caulobacter maris)).